The sequence spans 421 residues: D-amino-acid oxidase (421 aa).

13 residues coordinate FAD: A12, G13, A14, V15, G47, G64, I65, K225, A226, R359, G385, G388, and L389. R359 contributes to the D-proline binding site. R359 serves as a coordination point for D-serine.

It belongs to the DAMOX/DASOX family. Requires FAD as cofactor.

It is found in the cytoplasm. The protein localises to the secreted. The protein resides in the cell wall. It carries out the reaction a D-alpha-amino acid + O2 + H2O = a 2-oxocarboxylate + H2O2 + NH4(+). Its function is as follows. Catalyzes the oxidative deamination of D-amino acids with broad substrate specificity. In Bradyrhizobium diazoefficiens (strain JCM 10833 / BCRC 13528 / IAM 13628 / NBRC 14792 / USDA 110), this protein is D-amino-acid oxidase.